The primary structure comprises 46 residues: Defensin Tk-AMP-D6.1 (46 aa).

Disulfide bonds link C3/C46, C14/C34, C20/C40, and C24/C42.

Plant defense peptide. This is Defensin Tk-AMP-D6.1 from Triticum kiharae (Wheat).